A 185-amino-acid polypeptide reads, in one-letter code: MKNVIDFVIISGYWPPAGGFGLNANLLETNLINSGVVLGLPVYSGKGVLSNLLNNRKQTILSTIRDAEERYEEATDKLKQARTRLQQAKIKADEIRINGLSRMEGEKQDLVDSADGNSKRLEDSKNATIRFEEQRAIEQVRQQVSRLALERALEVLNIRLNSELQSRMIDYHIDLLVRAAENTTD.

Residues 31 to 49 form a helical membrane-spanning segment; it reads LINSGVVLGLPVYSGKGVL.

The protein belongs to the ATPase B chain family. In terms of assembly, F-type ATPases have 2 components, F(1) - the catalytic core - and F(0) - the membrane proton channel. F(1) has five subunits: alpha(3), beta(3), gamma(1), delta(1), epsilon(1). F(0) has four main subunits: a(1), b(1), b'(1) and c(10-14). The alpha and beta chains form an alternating ring which encloses part of the gamma chain. F(1) is attached to F(0) by a central stalk formed by the gamma and epsilon chains, while a peripheral stalk is formed by the delta, b and b' chains.

It is found in the plastid. It localises to the chloroplast thylakoid membrane. In terms of biological role, f(1)F(0) ATP synthase produces ATP from ADP in the presence of a proton or sodium gradient. F-type ATPases consist of two structural domains, F(1) containing the extramembraneous catalytic core and F(0) containing the membrane proton channel, linked together by a central stalk and a peripheral stalk. During catalysis, ATP synthesis in the catalytic domain of F(1) is coupled via a rotary mechanism of the central stalk subunits to proton translocation. Functionally, component of the F(0) channel, it forms part of the peripheral stalk, linking F(1) to F(0). In Huperzia lucidula (Shining clubmoss), this protein is ATP synthase subunit b, chloroplastic.